The primary structure comprises 644 residues: Probable lysophospholipase 2 (644 aa).

A signal peptide spans 1-19 (MYFQSFYFLALLLATAVYG). 18 N-linked (GlcNAc...) asparagine glycosylation sites follow: Asn44, Asn96, Asn141, Asn178, Asn221, Asn245, Asn253, Asn281, Asn286, Asn316, Asn319, Asn373, Asn393, Asn449, Asn501, Asn558, Asn579, and Asn596. Positions 53–600 (SCDSSEIMVN…SQYCWNGTVD (548 aa)) constitute a PLA2c domain.

The protein belongs to the lysophospholipase family.

It is found in the secreted. It catalyses the reaction a 1-acyl-sn-glycero-3-phosphocholine + H2O = sn-glycerol 3-phosphocholine + a fatty acid + H(+). In terms of biological role, catalyzes the release of fatty acids from lysophospholipids. This chain is Probable lysophospholipase 2 (plb2), found in Schizosaccharomyces pombe (strain 972 / ATCC 24843) (Fission yeast).